The primary structure comprises 52 residues: Ribosome modulation factor (52 aa).

The protein belongs to the ribosome modulation factor family.

Its subcellular location is the cytoplasm. Its function is as follows. During stationary phase, converts 70S ribosomes to an inactive dimeric form (100S ribosomes). The chain is Ribosome modulation factor from Xenorhabdus nematophila (strain ATCC 19061 / DSM 3370 / CCUG 14189 / LMG 1036 / NCIMB 9965 / AN6).